Here is a 141-residue protein sequence, read N- to C-terminus: Large ribosomal subunit protein uL11 (141 aa).

The protein belongs to the universal ribosomal protein uL11 family. Part of the ribosomal stalk of the 50S ribosomal subunit. Interacts with L10 and the large rRNA to form the base of the stalk. L10 forms an elongated spine to which L12 dimers bind in a sequential fashion forming a multimeric L10(L12)X complex. Post-translationally, one or more lysine residues are methylated.

Its function is as follows. Forms part of the ribosomal stalk which helps the ribosome interact with GTP-bound translation factors. The chain is Large ribosomal subunit protein uL11 from Levilactobacillus brevis (strain ATCC 367 / BCRC 12310 / CIP 105137 / JCM 1170 / LMG 11437 / NCIMB 947 / NCTC 947) (Lactobacillus brevis).